Here is a 1150-residue protein sequence, read N- to C-terminus: ATP-dependent helicase/deoxyribonuclease subunit B (1150 aa).

8-15 (GRAGSGKS) contributes to the ATP binding site. Residues Cys786, Cys1106, Cys1109, and Cys1115 each contribute to the [4Fe-4S] cluster site.

This sequence belongs to the helicase family. AddB/RexB type 1 subfamily. As to quaternary structure, heterodimer of AddA and AddB. Mg(2+) is required as a cofactor. It depends on [4Fe-4S] cluster as a cofactor.

Functionally, the heterodimer acts as both an ATP-dependent DNA helicase and an ATP-dependent, dual-direction single-stranded exonuclease. Recognizes the chi site generating a DNA molecule suitable for the initiation of homologous recombination. The AddB subunit has 5' -&gt; 3' nuclease activity but not helicase activity. The chain is ATP-dependent helicase/deoxyribonuclease subunit B from Clostridium botulinum (strain Langeland / NCTC 10281 / Type F).